The following is a 443-amino-acid chain: Protein king tubby (443 aa).

2 disordered regions span residues 57–85 (TNGS…LSTI) and 98–189 (HELE…ESEG). Residues 68–85 (AVNTSRNHSNNMRSLSTI) are compositionally biased toward polar residues. The span at 113–128 (QHQQSASHSANSTQSQ) shows a compositional bias: low complexity. Phosphoserine is present on Ser-136. Residues 148–160 (NRNVAAAAPVRPA) are compositionally biased toward low complexity. Residues 177 to 186 (NGTGNGTGGE) are compositionally biased toward gly residues.

It belongs to the TUB family.

It is found in the cytoplasm. The protein localises to the nucleus. Its subcellular location is the cell projection. It localises to the cilium membrane. The protein resides in the rhabdomere. The sequence is that of Protein king tubby from Drosophila yakuba (Fruit fly).